The following is a 324-amino-acid chain: Beta-ketoacyl-[acyl-carrier-protein] synthase III (324 aa).

Catalysis depends on residues Cys111 and His251. The tract at residues 252 to 256 (QANTR) is ACP-binding. Residue Asn281 is part of the active site.

Belongs to the thiolase-like superfamily. FabH family. In terms of assembly, homodimer.

Its subcellular location is the plastid. The protein localises to the chloroplast. It catalyses the reaction malonyl-[ACP] + acetyl-CoA + H(+) = 3-oxobutanoyl-[ACP] + CO2 + CoA. Its pathway is lipid metabolism; fatty acid biosynthesis. In terms of biological role, catalyzes the condensation reaction of fatty acid synthesis by the addition to an acyl acceptor of two carbons from malonyl-ACP. Catalyzes the first condensation reaction which initiates fatty acid synthesis and may therefore play a role in governing the total rate of fatty acid production. Possesses both acetoacetyl-ACP synthase and acetyl transacylase activities. Its substrate specificity determines the biosynthesis of branched-chain and/or straight-chain of fatty acids. The polypeptide is Beta-ketoacyl-[acyl-carrier-protein] synthase III (Pyropia yezoensis (Susabi-nori)).